Consider the following 527-residue polypeptide: Mitogen-activated protein kinase kinae MKK2 (527 aa).

Disordered regions lie at residues 1–143 (MHDQ…SAGS) and 156–189 (IGSTRPQGTPDPASAVGSIYSERSDGGAGMDKDG). Residues 107-129 (QQGQSASGGSESSAAHSRSGSFG) show a composition bias toward low complexity. The span at 134-143 (RTSNPTSAGS) shows a compositional bias: polar residues. The span at 177–189 (ERSDGGAGMDKDG) shows a compositional bias: basic and acidic residues. One can recognise a Protein kinase domain in the interval 227-497 (IVELGGLGEG…PWRMLEHPWM (271 aa)). ATP-binding positions include 233–241 (LGEGAGGAV) and K256.

Belongs to the protein kinase superfamily. STE Ser/Thr protein kinase family. MAP kinase kinase subfamily. As to quaternary structure, interacts with the adapter protein MST50.

It carries out the reaction L-seryl-[protein] + ATP = O-phospho-L-seryl-[protein] + ADP + H(+). The enzyme catalyses L-threonyl-[protein] + ATP = O-phospho-L-threonyl-[protein] + ADP + H(+). Mitogen-activated protein kinase kinase; part of the MCK1-MKK2-MPS1 MAP kinase (MAPK) signal transduction cascade that is essential for appressorium formation, penetration and invasive growth. Beside its role in pathogenesis, the MPS1 cascade is active in conidiation and cellular stress responses. Targets downstream of the the MPS1-MAPK pathway include transcription factors MIG1 and SWI6, as well as GSK1 and MPG1. This chain is Mitogen-activated protein kinase kinae MKK2, found in Pyricularia oryzae (strain 70-15 / ATCC MYA-4617 / FGSC 8958) (Rice blast fungus).